The following is a 350-amino-acid chain: uncharacterized protein (350 aa).

A run of 3 helical transmembrane segments spans residues 10–30, 51–71, and 327–347; these read YSFILCLAVGSVTIYTSEVIG, FAGILFTALVQLFSPTPVTLT, and ILSLFSVLFTCIVAGLFLKLF.

It belongs to the 1-acyl-sn-glycerol-3-phosphate acyltransferase family.

The protein resides in the endoplasmic reticulum membrane. This is an uncharacterized protein from Schizosaccharomyces pombe (strain 972 / ATCC 24843) (Fission yeast).